The primary structure comprises 1164 residues: MDKYNNYSNVIKNKSSISPLLAAAAKIEPEITVLSSASKSNRSQYSQSLADTLLGLGYRSIFDIAKVSRQRFIKRHDESLLGNGAVIFDKAVSMANQVLQKYRKNRLEKSNSPLVPQTSSSTDASSESQTNKLPEYNQLFPEPWDNFCRPGAIEALDSPASYLLDLYKFIQSVELDGSNQARKLETRRADIPKLSLDNDALYKEVTALSIVNDVLSGSAREYIDQSGQADKAVNQILGDTHFPFTLPYSLPTQQINKGLGASNIELGTVIQRVDPQFSWNTTQEKYNQVLLAYTQLSSEQIALLSLPDVFTQNFLTQTELSAGYLSASTTEILAEKDLSRHGYIVKAADNIKGPTQLVEHSDASYDVIELTCTNQAKETITVKLRGENIITYQRTKARMVPFDNSSPFSRQLKLTFVAEDNPSLGNLDKGPYFANMDIYAAEWVRENVSSETMVSRPFLTMTYRIAIAKAGASLEELQPEADAFFINNFGLSAEDSSQLVKLVAFGDQTGSKAEEIESLLSCGENLPIVSPNVIFANPIFGSYFNDEPFPAPYHFGGVYINAHQRNAMTIIRAEGGREIQSLSNFRLERLNRFIRLQRWLDLPSHQLDLLLTSVMQADADNSQQEITEPVLKSLGLFRHLNLQYKITPEIFSSWLYQLTPFAVSGEIAFFDRIFNREQLFDQPFILDGGSFTYLDAKGSDAKSVKQLCAGLNISAVTFQFIAPLVQSALGLEAGTLVRSFEVVSSLYRLVSIPQTFGLSTEDGLILMNILTDEMGYLAKQPAFDDKQTQDKDFLSIILKMEALSAWLTKNNLTPASLALLLGVTRLAVVPTNNMVTFFKGIANGLSENVCLTTDDFQRQELEGADWWTLLSTNQVIDDMGLVLDIHPVWGKSDEEMLMEKIQSIGVSNDNNTLSIIVQILIQAKNAQENLLSQTISAEYGVERSVVPLQLRWLGSNVYSVLNQVLNNTPTDISSIVPKLSELTYSLLIYTQLINSLKLNKEFIFLRLTQPNWLGLTQPKLSTQLSLPEIYLITCYQDWVVNANKNEDSIHEYLEFANIKKTEAEKTLVDNSEKCAELLAEILAWDAGEILKAASLLGLNPPQATNVFEIDWIRRLQTLSEKTMISTEYLWQMGDLTENSEFSLKEGVGEAVMAALKAQGDSDNV.

Residues 106–131 (RLEKSNSPLVPQTSSSTDASSESQTN) form a disordered region. A compositionally biased stretch (low complexity) spans 118–130 (TSSSTDASSESQT).

Semipurified toxin complex consists of at least YenA1, YenA2, YenB, YenC1, YenC2, Chi1 and Chi2. The Yen-TC:K9 subcomplex is about 26 nm tall and 22 nm in diameter with 5-fold symmetry and 5 copies of YenA1, YenA2, Chi1 and Chi2; the chitinase subunits may be solvent accessible on the exterior the complex. The Yen-TC:K9 subcomplex has no insecticidal activity. The native complex with additional YenB, YenC1 and YenC2 subunits is 16 nm taller and is insecticidal; the toxicity-conferring subunits are present at about 1 copy each.

The protein resides in the secreted. Its activity is regulated as follows. Toxin complex is secreted when grown at 25 degrees Celsius or less; at higher temperatures the proteins are present intracellularly but not secreted. Part of an orally active toxin complex (TC) with strong insecticidal effects on larvae of the Coleoptera Costelytra zealandica, Acrossidius tasmania and Adoryphorus couloni and some Lepidoptera larvae. The TC has an endochitinase activity. The sequence is that of Toxin subunit YenA1 from Yersinia entomophaga.